A 118-amino-acid polypeptide reads, in one-letter code: uncharacterized protein (118 aa).

The signal sequence occupies residues M1–A18. The N-linked (GlcNAc...) asparagine; by host glycan is linked to N24.

This is an uncharacterized protein from Magallana gigas (Pacific oyster).